A 236-amino-acid polypeptide reads, in one-letter code: Heme oxygenase (236 aa).

His17 is a heme b binding site.

Belongs to the heme oxygenase family.

It localises to the plastid. The protein resides in the chloroplast. It carries out the reaction heme b + 3 reduced [NADPH--hemoprotein reductase] + 3 O2 = biliverdin IXalpha + CO + Fe(2+) + 3 oxidized [NADPH--hemoprotein reductase] + 3 H2O + H(+). Functionally, catalyzes the opening of the heme ring with the release of iron. Key enzyme in the synthesis of the chromophoric part of the photosynthetic antennae. This is Heme oxygenase (pbsA) from Porphyra purpurea (Red seaweed).